Reading from the N-terminus, the 101-residue chain is MQIAKVRGTVVSTQKDPSLRGVKLLLLQLVDEEGNLLQKYEVAADNSVGAGFDEWVLISRGSAARQLLGNEQRPVDAAVVAIIDTIHVEDRLIYSKKDQYR.

Residues 1–84 enclose the BMV domain; sequence MQIAKVRGTV…VDAAVVAIID (84 aa).

This sequence belongs to the CcmL/EutN family. CcmL subfamily. As to quaternary structure, homopentamer. Interacts with full-length CcmM.

It is found in the carboxysome. Probably forms vertices in the carboxysome, a polyhedral inclusion where RuBisCO (ribulose bisphosphate carboxylase, rbcL-rbcS) is sequestered. Has been modeled to induce curvature upon insertion into an otherwise flat hexagonal molecular layer of CcmK subunits. This chain is Carboxysome shell vertex protein CcmL, found in Nostoc sp. (strain PCC 7120 / SAG 25.82 / UTEX 2576).